Consider the following 119-residue polypeptide: Protein YdaY (119 aa).

The sequence is that of Protein YdaY (ydaY) from Escherichia coli (strain K12).